A 386-amino-acid polypeptide reads, in one-letter code: Decapping nuclease RAI1 (386 aa).

Position 34 (arginine 34) interacts with substrate. Residue glutamate 159 coordinates a divalent metal cation. Substrate is bound at residue glutamate 205. A divalent metal cation is bound by residues aspartate 207, glutamate 225, and leucine 226. Substrate contacts are provided by lysine 227 and glutamine 251.

The protein belongs to the DXO/Dom3Z family. As to quaternary structure, interacts with RAT1; the interaction is direct, stabilizes RAT1 protein structure and stimulates its exoribonuclease activity. The interaction also stimulates RAI1 pyrophosphohydrolase activity, probably by recruiting it to mRNA substrates. It depends on a divalent metal cation as a cofactor.

Its subcellular location is the nucleus. The catalysed reaction is a 5'-end NAD(+)-phospho-ribonucleoside in mRNA + H2O = a 5'-end phospho-ribonucleoside in mRNA + NAD(+) + H(+). It catalyses the reaction a 5'-end (N(7)-methyl 5'-triphosphoguanosine)-ribonucleoside-ribonucleotide in mRNA + H2O = a (N(7)-methyl 5'-triphosphoguanosine)-nucleoside + a 5'-end phospho-ribonucleoside in mRNA + H(+). It carries out the reaction a 5'-end triphospho-ribonucleoside in mRNA + H2O = a 5'-end phospho-ribonucleoside in mRNA + diphosphate + H(+). Decapping enzyme for NAD-capped RNAs: specifically hydrolyzes the nicotinamide adenine dinucleotide (NAD) cap from a subset of RNAs by removing the entire NAD moiety from the 5'-end of an NAD-capped RNA. The NAD-cap is present at the 5'-end of some RNAs and snoRNAs. In contrast to the canonical 5'-end N7 methylguanosine (m7G) cap, the NAD cap promotes mRNA decay. Also acts as a non-canonical decapping enzyme that removes the entire cap structure of m7G capped or incompletely capped RNAs. Has decapping activity toward incomplete 5'-end m7G cap mRNAs such as unmethylated 5'-end-capped RNA (cap0), while it has no activity toward 2'-O-ribose methylated m7G cap (cap1). Also possesses RNA 5'-pyrophosphohydrolase activity by hydrolyzing the 5'-end triphosphate to release pyrophosphates. Stimulates exoribonuclease activity of Rat1, allowing it to degrade RNAs with stable secondary structure more effectively. This chain is Decapping nuclease RAI1 (RAI1), found in Cryptococcus neoformans var. neoformans serotype D (strain B-3501A) (Filobasidiella neoformans).